We begin with the raw amino-acid sequence, 303 residues long: Growth/differentiation factor 15 (303 aa).

The signal sequence occupies residues M1–S30. Residues W31 to R188 constitute a propeptide that is removed on maturation. N-linked (GlcNAc...) asparagine glycosylation is present at N71. 4 disulfide bridges follow: C198–C205, C206–C269, C235–C300, and C239–C302.

Belongs to the TGF-beta family. As to quaternary structure, homodimer; disulfide-linked. Interacts with GFRAL and RET; ligand of GFRAL, which mediates GDF15 internalization and cellular signaling through interaction with RET via the formation of a 2:2:2 ternary complex composed of GDF15, GFRAL and RET. In terms of tissue distribution, detected in plasma (at protein level).

The protein localises to the secreted. Functionally, hormone produced in response to various stresses to confer information about those stresses to the brain, and trigger an aversive response, characterized by nausea and/or loss of appetite. The aversive response is both required to reduce continuing exposure to those stresses at the time of exposure and to promote avoidance behavior in the future. Acts by binding to its receptor, GFRAL, activating GFRAL-expressing neurons localized in the area postrema and nucleus tractus solitarius of the brainstem. It then triggers the activation of neurons localized within the parabrachial nucleus and central amygdala, which constitutes part of the 'emergency circuit' that shapes responses to stressful conditions. The GDF15-GFRAL signal induces expression of genes involved in metabolism, such as lipid metabolism in adipose tissues. Contributes to the effect of metformin, an anti-diabetic drug, on appetite reduction and weight loss: produced in the kidney in response to metformin treatment, thereby activating the GDF15-GFRAL response, leading to reduced appetite and weight. Required for avoidance behavior in response to food allergens: induced downstream of mast cell activation to promote aversion and minimize harmful effects of exposure to noxious substances. Produced in response to anticancer drugs, such as camptothecin or cisplatin, promoting nausea and contributing to malnutrition. Overproduced in many cancers, promoting anorexia in cancer (cachexia). Responsible for the risk of nausea during pregnancy: high levels of GDF15 during pregnancy, mostly originating from embryos, are associated with increased nausea. Maternal sensitivity to nausea is probably determined by pre-pregnancy exposure to GDF15, females with naturally high level of GDF15 being less susceptible to nausea than female rats with low levels of GDF15 before pregnancy. Promotes metabolic adaptation in response to systemic inflammation caused by bacterial and viral infections in order to promote tissue tolerance and prevent tissue damage. Required for tissue tolerance in response to myocardial infarction by acting as an inhibitor of leukocyte integring activation, thereby protecting against cardiac rupture. Inhibits growth hormone signaling on hepatocytes. This Rattus norvegicus (Rat) protein is Growth/differentiation factor 15.